The primary structure comprises 164 residues: MGKGGGKKSAAARAAANRLLADNRLARHQYEILETLETGIELLGTEVKSVRAGQANLRDGFCLIRRGELHLHNVHISPHTHASRYFNHDPLRVRRLLAHRREIDKLRGHLEQKGLTLIPLNLHLQGSWIKVTIGLGKGRKLHDKRAAAKDKQVKKETRDAIARY.

Belongs to the SmpB family.

Its subcellular location is the cytoplasm. Its function is as follows. Required for rescue of stalled ribosomes mediated by trans-translation. Binds to transfer-messenger RNA (tmRNA), required for stable association of tmRNA with ribosomes. tmRNA and SmpB together mimic tRNA shape, replacing the anticodon stem-loop with SmpB. tmRNA is encoded by the ssrA gene; the 2 termini fold to resemble tRNA(Ala) and it encodes a 'tag peptide', a short internal open reading frame. During trans-translation Ala-aminoacylated tmRNA acts like a tRNA, entering the A-site of stalled ribosomes, displacing the stalled mRNA. The ribosome then switches to translate the ORF on the tmRNA; the nascent peptide is terminated with the 'tag peptide' encoded by the tmRNA and targeted for degradation. The ribosome is freed to recommence translation, which seems to be the essential function of trans-translation. In Synechococcus sp. (strain CC9311), this protein is SsrA-binding protein.